We begin with the raw amino-acid sequence, 388 residues long: Probable E3 ubiquitin-protein ligase LOG2 (388 aa).

The tract at residues 1-43 (MGNISSSGGEGRRRRRRNHTAAPPPPPPPPSSSLPPPPLPTEI) is disordered. Glycine 2 carries the N-myristoyl glycine lipid modification. Positions 22 to 40 (APPPPPPPPSSSLPPPPLP) are enriched in pro residues. The interval 159–281 (FTFDATVSGR…GEIKIRVVKQ (123 aa)) is DAR2 domain. Residues 319–358 (CVICLSEPRDTTVLPCRHMCMCSGCAKVLRFQTNRCPICR) form an RING-type; atypical zinc finger. The segment at 368-388 (KVHGNNGSGNNTGQGETVEQE) is disordered.

The protein belongs to the RING-type zinc finger family. LOG2 subfamily. In terms of assembly, interacts with GDU1. Post-translationally, myristoylated (in vitro). As to expression, expressed in the vascular tissues in both phloem and xylem parenchyma cells.

Its subcellular location is the cell membrane. It catalyses the reaction S-ubiquitinyl-[E2 ubiquitin-conjugating enzyme]-L-cysteine + [acceptor protein]-L-lysine = [E2 ubiquitin-conjugating enzyme]-L-cysteine + N(6)-ubiquitinyl-[acceptor protein]-L-lysine.. It participates in protein modification; protein ubiquitination. Functionally, acts as an E3 ubiquitin-protein ligase, or as part of E3 complex, which accepts ubiquitin from specific E2 ubiquitin-conjugating enzymes and then transfers it to substrates (in vitro). Required for GLUTAMINE DUMPER 1(GDU1)-induced amino acid secretion and for amino acid homeostasis. Ubiquitinates GDU1 (in vitro). The chain is Probable E3 ubiquitin-protein ligase LOG2 (LOG2) from Arabidopsis thaliana (Mouse-ear cress).